A 134-amino-acid polypeptide reads, in one-letter code: Transcription antitermination protein NusB (134 aa).

The protein belongs to the NusB family.

Its function is as follows. Involved in transcription antitermination. Required for transcription of ribosomal RNA (rRNA) genes. Binds specifically to the boxA antiterminator sequence of the ribosomal RNA (rrn) operons. This is Transcription antitermination protein NusB from Syntrophomonas wolfei subsp. wolfei (strain DSM 2245B / Goettingen).